The following is a 120-amino-acid chain: UPF0231 protein CKO_03249 (120 aa).

It belongs to the UPF0231 family.

The sequence is that of UPF0231 protein CKO_03249 from Citrobacter koseri (strain ATCC BAA-895 / CDC 4225-83 / SGSC4696).